The sequence spans 431 residues: Glutamate-1-semialdehyde 2,1-aminomutase 1 (431 aa).

Lys268 carries the post-translational modification N6-(pyridoxal phosphate)lysine.

This sequence belongs to the class-III pyridoxal-phosphate-dependent aminotransferase family. HemL subfamily. Homodimer. Pyridoxal 5'-phosphate serves as cofactor.

It is found in the cytoplasm. It catalyses the reaction (S)-4-amino-5-oxopentanoate = 5-aminolevulinate. Its pathway is porphyrin-containing compound metabolism; protoporphyrin-IX biosynthesis; 5-aminolevulinate from L-glutamyl-tRNA(Glu): step 2/2. The sequence is that of Glutamate-1-semialdehyde 2,1-aminomutase 1 from Bacillus pumilus (strain SAFR-032).